The sequence spans 876 residues: Alanine--tRNA ligase (876 aa).

Zn(2+) is bound by residues His563, His567, Cys665, and His669.

It belongs to the class-II aminoacyl-tRNA synthetase family. It depends on Zn(2+) as a cofactor.

It localises to the cytoplasm. The enzyme catalyses tRNA(Ala) + L-alanine + ATP = L-alanyl-tRNA(Ala) + AMP + diphosphate. Its function is as follows. Catalyzes the attachment of alanine to tRNA(Ala) in a two-step reaction: alanine is first activated by ATP to form Ala-AMP and then transferred to the acceptor end of tRNA(Ala). Also edits incorrectly charged Ser-tRNA(Ala) and Gly-tRNA(Ala) via its editing domain. In Shouchella clausii (strain KSM-K16) (Alkalihalobacillus clausii), this protein is Alanine--tRNA ligase.